The sequence spans 427 residues: Homoserine O-acetyltransferase FUB5 (427 aa).

Residues 1 to 13 show a composition bias toward low complexity; the sequence is MTTTTTAPALPTP. The tract at residues 1–35 is disordered; it reads MTTTTTAPALPTPIHDGLGNGTTYERSIPRPVNPF. The 324-residue stretch at 77–400 folds into the AB hydrolase-1 domain; the sequence is NVMIICHALS…VSDDGHDAFL (324 aa). The active-site Nucleophile is serine 175. The segment at 260 to 297 is disordered; it reads RFGRDTGNKKKAKNKGSETLPSNSTPIHSQGGADETPV. Residues 276-287 are compositionally biased toward polar residues; it reads SETLPSNSTPIH. Active-site residues include aspartate 367 and histidine 396.

This sequence belongs to the AB hydrolase superfamily. MetX family.

The catalysed reaction is L-homoserine + acetyl-CoA = O-acetyl-L-homoserine + CoA. It functions in the pathway mycotoxin biosynthesis. In terms of biological role, homoserine O-acetyltransferase; part of the gene cluster that mediates the biosynthesis of fusaric acid, a mycotoxin with low to moderate toxicity to animals and humans, but with high phytotoxic properties. L-aspartate is suggested as fusaric acid amino acid precursor that is activated and further processed to O-acetyl-L-homoserine by cluster enzymes aspartate kinase FUB3 and homoserine O-acetyltransferase FUB5, as well as enzymes of the primary metabolism. The polyketide synthase (PKS) FUB1 generates the triketide trans-2-hexenal which is presumptively released by the hydrolase FUB4 and linked to the NRPS-bound amino acid precursor by NAD(P)-dependent dehydrogenase FUB6. FUB1, FUB4, and the non-canonical NRPS Fub8 may form an enzyme complex. Further processing of the NRPS-bound intermediate might be carried out by FUB6 and the sulfhydrylase FUB7, enabling a spontaneous electrocyclization to close the carbon backbone of fusaric acid. Dihydrofusaric acid is likely to be released via reduction by the thioester reductase (TR) domain of FUB8 whereupon the final oxidation to fusaric acid may (also) be performed by the FMN-dependent dehydrogenase FUB9. The sequence is that of Homoserine O-acetyltransferase FUB5 from Gibberella fujikuroi (strain CBS 195.34 / IMI 58289 / NRRL A-6831) (Bakanae and foot rot disease fungus).